Here is an 808-residue protein sequence, read N- to C-terminus: Leucine--tRNA ligase (808 aa).

The 'HIGH' region motif lies at 40-51 (PYPSGQGLHVGH). The 'KMSKS' region signature appears at 580-584 (KMSKS). Lys583 contacts ATP.

The protein belongs to the class-I aminoacyl-tRNA synthetase family.

It localises to the cytoplasm. It carries out the reaction tRNA(Leu) + L-leucine + ATP = L-leucyl-tRNA(Leu) + AMP + diphosphate. The polypeptide is Leucine--tRNA ligase (Leuconostoc mesenteroides subsp. mesenteroides (strain ATCC 8293 / DSM 20343 / BCRC 11652 / CCM 1803 / JCM 6124 / NCDO 523 / NBRC 100496 / NCIMB 8023 / NCTC 12954 / NRRL B-1118 / 37Y)).